The sequence spans 650 residues: Macrolide export ATP-binding/permease protein MacB (650 aa).

In terms of domain architecture, ABC transporter spans 5–243 (LELKDIRRSY…AGGTEPVVNT (239 aa)). An ATP-binding site is contributed by 41 to 48 (GASGSGKS). Helical transmembrane passes span 273–293 (LLTMLGIIIGIASVVSIVVVG), 523–543 (LFLTLVAVISLVVGGIGVMNI), 554–574 (ANDIPMDVGAGASYVLYHLFF), 580–600 (VLPAVGGALGITLSLLIAFTL), and 613–633 (PLALLLAFLCSTVTGILFGWL).

The protein belongs to the ABC transporter superfamily. Macrolide exporter (TC 3.A.1.122) family. As to quaternary structure, homodimer. Part of the tripartite efflux system MacAB-TolC, which is composed of an inner membrane transporter, MacB, a periplasmic membrane fusion protein, MacA, and an outer membrane component, TolC. The complex forms a large protein conduit and can translocate molecules across both the inner and outer membranes. Interacts with MacA.

It is found in the cell inner membrane. Part of the tripartite efflux system MacAB-TolC. MacB is a non-canonical ABC transporter that contains transmembrane domains (TMD), which form a pore in the inner membrane, and an ATP-binding domain (NBD), which is responsible for energy generation. Confers resistance against macrolides. This Shigella dysenteriae serotype 1 (strain Sd197) protein is Macrolide export ATP-binding/permease protein MacB.